A 275-amino-acid polypeptide reads, in one-letter code: Elongation factor Ts (275 aa).

Residues 76 to 79 (TDFV) are involved in Mg(2+) ion dislocation from EF-Tu.

It belongs to the EF-Ts family.

The protein resides in the cytoplasm. Its function is as follows. Associates with the EF-Tu.GDP complex and induces the exchange of GDP to GTP. It remains bound to the aminoacyl-tRNA.EF-Tu.GTP complex up to the GTP hydrolysis stage on the ribosome. This Rhodococcus erythropolis (strain PR4 / NBRC 100887) protein is Elongation factor Ts.